The primary structure comprises 292 residues: MFKKALFILSLCPSFALAQSYVVYDFTHNRVLESHASDSIQPIASVTKLMTANVFLENNKNPNCRIAITKEDTDRIKGTGTKLPKNIPISCNELLKAMLVHSDNYAAHALSRAAGISRRQFIKKMNEKAHQLGMYSTRFHDSSGLSSYNISSPMDLVKLAKYSLNKSDIKRLSNLSATYIQAGKQKLYIKNTNKLVRDEIFDAAVNKTGYIQESGYNLVFINKHRCKNATIGVISLNNTSSAYRSSFTKSKLEKFGCTALNGRTIRDVAGEAQYEDGYDEVGFNTLIQKLSK.

The N-terminal stretch at 1–18 is a signal peptide; sequence MFKKALFILSLCPSFALA. The active-site Acyl-ester intermediate is serine 45. Catalysis depends on lysine 48, which acts as the Proton acceptor. The active site involves serine 102. Position 207 (lysine 207) interacts with substrate.

It belongs to the peptidase S11 family.

It is found in the periplasm. Its function is as follows. Cell wall formation. May play a specialized role in remodeling the cell wall. Specifically hydrolyzes the DD-diaminopimelate-alanine bonds in high-molecular-mass murein sacculi. The polypeptide is D-alanyl-D-alanine endopeptidase (pbpG) (Haemophilus influenzae (strain ATCC 51907 / DSM 11121 / KW20 / Rd)).